A 351-amino-acid chain; its full sequence is Dihydroorotate dehydrogenase (quinone) (351 aa).

Residues 65-69 (AGLDK) and Thr-89 each bind FMN. Lys-69 provides a ligand contact to substrate. 114–118 (NRLGF) contacts substrate. Asn-150 and Asn-183 together coordinate FMN. Asn-183 provides a ligand contact to substrate. Ser-186 serves as the catalytic Nucleophile. Asn-188 is a substrate binding site. Positions 228 and 256 each coordinate FMN. A substrate-binding site is contributed by 257 to 258 (NT). Residues Gly-279, Gly-308, and 329–330 (YT) contribute to the FMN site.

Belongs to the dihydroorotate dehydrogenase family. Type 2 subfamily. As to quaternary structure, monomer. FMN is required as a cofactor.

The protein resides in the cell membrane. It carries out the reaction (S)-dihydroorotate + a quinone = orotate + a quinol. It functions in the pathway pyrimidine metabolism; UMP biosynthesis via de novo pathway; orotate from (S)-dihydroorotate (quinone route): step 1/1. Functionally, catalyzes the conversion of dihydroorotate to orotate with quinone as electron acceptor. The polypeptide is Dihydroorotate dehydrogenase (quinone) (Acidovorax ebreus (strain TPSY) (Diaphorobacter sp. (strain TPSY))).